A 315-amino-acid chain; its full sequence is Porphobilinogen deaminase (315 aa).

Cys251 is subject to S-(dipyrrolylmethanemethyl)cysteine.

Belongs to the HMBS family. As to quaternary structure, monomer. Requires dipyrromethane as cofactor.

It carries out the reaction 4 porphobilinogen + H2O = hydroxymethylbilane + 4 NH4(+). It functions in the pathway porphyrin-containing compound metabolism; protoporphyrin-IX biosynthesis; coproporphyrinogen-III from 5-aminolevulinate: step 2/4. Its function is as follows. Tetrapolymerization of the monopyrrole PBG into the hydroxymethylbilane pre-uroporphyrinogen in several discrete steps. The polypeptide is Porphobilinogen deaminase (Sphingopyxis alaskensis (strain DSM 13593 / LMG 18877 / RB2256) (Sphingomonas alaskensis)).